The chain runs to 544 residues: Chaperonin GroEL 2 (544 aa).

Residues 29–32, 86–90, G413, 479–481, and D495 contribute to the ATP site; these read TLGP, DGTTT, and NAA.

This sequence belongs to the chaperonin (HSP60) family. Forms a cylinder of 14 subunits composed of two heptameric rings stacked back-to-back. Interacts with the co-chaperonin GroES.

It is found in the cytoplasm. It carries out the reaction ATP + H2O + a folded polypeptide = ADP + phosphate + an unfolded polypeptide.. Its function is as follows. Together with its co-chaperonin GroES, plays an essential role in assisting protein folding. The GroEL-GroES system forms a nano-cage that allows encapsulation of the non-native substrate proteins and provides a physical environment optimized to promote and accelerate protein folding. The protein is Chaperonin GroEL 2 of Synechococcus sp. (strain CC9605).